Here is a 78-residue protein sequence, read N- to C-terminus: Consomatin Nc1 (78 aa).

A signal peptide spans 1-22 (MQTAYWVMVMVMVWITAPLSEG). The propeptide occupies 23–59 (GKPNDVIRGLVPDDLTPQLILRSLISRRRSDKDVGKR). A 4-carboxyglutamate modification is found at E61. An intrachain disulfide couples C62 to C67. At W64 the chain carries D-tryptophan. P70 bears the 4-hydroxyproline mark. Residues 71–78 (LSRRHDLG) constitute a propeptide that is removed on maturation.

This sequence belongs to the conotoxin C superfamily. Consomatin family. Expressed by the venom duct.

It localises to the secreted. Moderately activates human somatostatin receptors (SSTR) with a preferential activation of SSTR1 and SSTR4. In vivo, does not cause behavioral changes in mice within a few minutes of intracranial injection, but causes a progressive loss of movement thereafter. Four to five hours after injection, mice recover, even with the highest dose tested. Shows antinociception and antihyperalgesia activities in two mouse models of acute pain, most probably by acting outside the central nervous system. This Conus neocostatus (Cone snail) protein is Consomatin Nc1.